Here is a 367-residue protein sequence, read N- to C-terminus: GPN-loop GTPase 1 (367 aa).

GTP-binding positions include G15 to T22 and G18 to T23. The short motif at G75–N77 is the Gly-Pro-Asn (GPN)-loop; involved in dimer interface element. N178–D181 provides a ligand contact to GTP. The stretch at E247–L290 forms a coiled coil. The segment at V306 to A332 is disordered. A Phosphoserine modification is found at S311. The span at D312–A332 shows a compositional bias: acidic residues.

This sequence belongs to the GPN-loop GTPase family. Heterodimers with gpn2 or fet5/gpn3. Binds to RNA polymerase II (RNAPII).

The protein localises to the cytoplasm. In terms of biological role, small GTPase required for proper nuclear import of RNA polymerase II (RNAPII). May act at an RNAP assembly step prior to nuclear import. The polypeptide is GPN-loop GTPase 1 (Schizosaccharomyces pombe (strain 972 / ATCC 24843) (Fission yeast)).